Consider the following 325-residue polypeptide: Dimethylsulfide dehydrogenase subunit beta (325 aa).

4Fe-4S ferredoxin-type domains lie at 6–35, 123–154, and 156–185; these read ISMV…RNGR, SYYF…KRQE, and GIVL…FNEQ. [4Fe-4S] cluster is bound by residues Cys-15, Cys-18, Cys-21, Cys-25, Cys-132, Cys-135, and Cys-140. Residues Cys-144, Cys-165, and Cys-171 each contribute to the [3Fe-4S] cluster site. Positions 175, 192, 195, 207, and 211 each coordinate [4Fe-4S] cluster.

Heterotrimer of alpha, beta and gamma subunits. Requires [3Fe-4S] cluster as cofactor. [4Fe-4S] cluster serves as cofactor.

It localises to the periplasm. Electron transfer subunit of the dehydrogenase during anaerobic growth on dimethyl sulfide. The polypeptide is Dimethylsulfide dehydrogenase subunit beta (ddhB) (Rhodovulum sulfidophilum (Rhodobacter sulfidophilus)).